The primary structure comprises 207 residues: Ras-related protein RABH1d (207 aa).

A GTP-binding site is contributed by 16–23; that stretch reads GDQSVGKT. The Effector region motif lies at 38-46; the sequence is YQATIGIDF. GTP contacts are provided by residues 64–68, 122–125, and 152–153; these read DTAGQ, NKTD, and SA. S-geranylgeranyl cysteine attachment occurs at residues Cys205 and Cys207. Position 207 is a cysteine methyl ester (Cys207).

Belongs to the small GTPase superfamily. Rab family.

The protein resides in the golgi apparatus membrane. Protein transport. Regulator of membrane traffic from the Golgi apparatus towards the endoplasmic reticulum (ER). The protein is Ras-related protein RABH1d (RABH1D) of Arabidopsis thaliana (Mouse-ear cress).